The chain runs to 437 residues: MDPDAGVIFARTAAGAAVALGLLKCGRIWLCPVCSGQDPARPSEEITEAVVSWLQQGGWAYLVTFTARHTAADRLSDLMDALQGTRADAETGTKRRPGAYQRLITGAAWAGDKRRKSNQEGIRGRIGYIGMIRATEVTVGEGAGWHPHIHAIVLVGGRTEGQRGDKRITGTFTPSEDALTEWEDRWRRSGPATLARSTPGFRPPTGARSPGATAGARATASTSSSSVRSGRQRPGRVHRQDAGRQEPGPGAGTRRPQGRPPGQHDVLRTPSRIGDLMGGVPEEEAAGHGSLAWGLDRWAEYETAVSGAGHRVDPLPAPAPGPDRRRHRGRRHGRPVPDRRRRRFRDGVQIWDRAWKGLVGRSLDLAVVEAVEGREISMDALGELVQSAGQSRAFLRVLTPQEVTELYDELLRTLARRREQAAERRAAEAAEAEPTTR.

Disordered regions lie at residues 161–285 (GQRG…EEEA) and 305–338 (VSGAGHRVDPLPAPAPGPDRRRHRGRRHGRPVPD). Residues 203-229 (PPTGARSPGATAGARATASTSSSSVRS) show a composition bias toward low complexity. The segment covering 324 to 338 (RRRHRGRRHGRPVPD) has biased composition (basic residues).

It belongs to the Gram-positive plasmids replication protein type 1 family.

The sequence is that of Neomycin resistance protein from Streptomyces cyanogenus.